Reading from the N-terminus, the 55-residue chain is Ferredoxin (55 aa).

4Fe-4S ferredoxin-type domains follow at residues 2 to 26 and 27 to 55; these read YKITDECIACGSCADQCPVEAISEG and SIYEIDEALCTDCGACADQCPVEAIVPED. [4Fe-4S] cluster-binding residues include Cys-8, Cys-11, Cys-14, Cys-18, Cys-36, Cys-39, Cys-42, and Cys-46.

[4Fe-4S] cluster is required as a cofactor.

Functionally, ferredoxins are iron-sulfur proteins that transfer electrons in a wide variety of metabolic reactions. This Butyribacterium methylotrophicum protein is Ferredoxin.